Consider the following 387-residue polypeptide: Ferrochelatase (387 aa).

Positions 196 and 277 each coordinate Fe cation.

Belongs to the ferrochelatase family.

The protein localises to the cytoplasm. It carries out the reaction heme b + 2 H(+) = protoporphyrin IX + Fe(2+). It functions in the pathway porphyrin-containing compound metabolism; protoheme biosynthesis; protoheme from protoporphyrin-IX: step 1/1. Functionally, catalyzes the ferrous insertion into protoporphyrin IX. The chain is Ferrochelatase from Synechococcus sp. (strain RCC307).